A 73-amino-acid chain; its full sequence is Conotoxin CnIIIE (73 aa).

Positions 1–19 (MSKLGVLLTICLLLFPLTA) are cleaved as a signal peptide. A propeptide spanning residues 20–49 (LPMDGDQSVDRPAERMQDDISSEQYPLFNQ) is cleaved from the precursor. 3 disulfides stabilise this stretch: Cys-53–Cys-72, Cys-54–Cys-70, and Cys-60–Cys-73.

The protein belongs to the conotoxin M superfamily. As to expression, expressed by the venom duct.

The protein localises to the secreted. Its function is as follows. Shows a paralytic effect in fish. This chain is Conotoxin CnIIIE, found in Conus consors (Singed cone).